The sequence spans 147 residues: Small ribosomal subunit protein eS19 (147 aa).

The protein belongs to the eukaryotic ribosomal protein eS19 family. In terms of assembly, component of the small ribosomal subunit.

The protein localises to the cytoplasm. It localises to the nucleus. In terms of biological role, component of the small ribosomal subunit. The ribosome is a large ribonucleoprotein complex responsible for the synthesis of proteins in the cell. Required for pre-rRNA processing and maturation of 40S ribosomal subunits. The protein is Small ribosomal subunit protein eS19 (rps19) of Gillichthys mirabilis (Long-jawed mudsucker).